Reading from the N-terminus, the 262-residue chain is Proteasome subunit alpha (262 aa).

The tract at residues 235 to 262 is disordered; sequence LLPTTGESDAGDSGADGSPSGDSPDTSA.

The protein belongs to the peptidase T1A family. In terms of assembly, the 20S proteasome core is composed of 14 alpha and 14 beta subunits that assemble into four stacked heptameric rings, resulting in a barrel-shaped structure. The two inner rings, each composed of seven catalytic beta subunits, are sandwiched by two outer rings, each composed of seven alpha subunits. The catalytic chamber with the active sites is on the inside of the barrel. Has a gated structure, the ends of the cylinder being occluded by the N-termini of the alpha-subunits. Is capped by the proteasome-associated ATPase, ARC.

It is found in the cytoplasm. Its pathway is protein degradation; proteasomal Pup-dependent pathway. The formation of the proteasomal ATPase ARC-20S proteasome complex, likely via the docking of the C-termini of ARC into the intersubunit pockets in the alpha-rings, may trigger opening of the gate for substrate entry. Interconversion between the open-gate and close-gate conformations leads to a dynamic regulation of the 20S proteasome proteolysis activity. Component of the proteasome core, a large protease complex with broad specificity involved in protein degradation. The chain is Proteasome subunit alpha from Gordonia bronchialis (strain ATCC 25592 / DSM 43247 / BCRC 13721 / JCM 3198 / KCTC 3076 / NBRC 16047 / NCTC 10667) (Rhodococcus bronchialis).